The chain runs to 337 residues: Protein hairy (337 aa).

The tract at residues 29–48 is interaction with Topors; that stretch reads KSDRRSNKPIMEKRRRARIN. The bHLH domain occupies 31–88; the sequence is DRRSNKPIMEKRRRARINNCLNELKTLILDATKKDPARHSKLEKADILEKTVKHLQEL. The 30-residue stretch at 107–136 folds into the Orange domain; it reads FKAGFADCVNEVSRFPGIEPAQRRRLLQHL. Disordered regions lie at residues 146–178 and 259–311; these read ELHQ…SQQG and MPQR…VIQR. Low complexity predominate over residues 263–301; that stretch reads TASTGSASSHSSAGYESAPGSSSSCSYAPPSPANSSYEP. A WRPW motif motif is present at residues 334-337; sequence WRPW.

In terms of assembly, transcription repression requires formation of a complex with a corepressor protein (Groucho). Interacts with gro (via WPRW motif) and Topors. Ubiquitinated by Topors.

The protein localises to the nucleus. Pair-rule protein that regulates embryonic segmentation and adult bristle patterning. Transcriptional repressor of genes that require a bHLH protein for their transcription (e.g. ftz). This is Protein hairy from Drosophila melanogaster (Fruit fly).